The chain runs to 283 residues: Large ribosomal subunit protein uL2 (283 aa).

Disordered stretches follow at residues 1–59 (MSIK…GGHK) and 222–283 (RGVA…TGGQ).

The protein belongs to the universal ribosomal protein uL2 family. As to quaternary structure, part of the 50S ribosomal subunit. Forms a bridge to the 30S subunit in the 70S ribosome.

One of the primary rRNA binding proteins. Required for association of the 30S and 50S subunits to form the 70S ribosome, for tRNA binding and peptide bond formation. It has been suggested to have peptidyltransferase activity; this is somewhat controversial. Makes several contacts with the 16S rRNA in the 70S ribosome. The sequence is that of Large ribosomal subunit protein uL2 from Salinibacter ruber (strain DSM 13855 / M31).